The sequence spans 210 residues: 7-methyl-GTP pyrophosphatase (210 aa).

Asp79 (proton acceptor) is an active-site residue.

The protein belongs to the Maf family. YceF subfamily. It depends on a divalent metal cation as a cofactor.

The protein resides in the cytoplasm. It catalyses the reaction N(7)-methyl-GTP + H2O = N(7)-methyl-GMP + diphosphate + H(+). In terms of biological role, nucleoside triphosphate pyrophosphatase that hydrolyzes 7-methyl-GTP (m(7)GTP). May have a dual role in cell division arrest and in preventing the incorporation of modified nucleotides into cellular nucleic acids. This Burkholderia lata (strain ATCC 17760 / DSM 23089 / LMG 22485 / NCIMB 9086 / R18194 / 383) protein is 7-methyl-GTP pyrophosphatase.